The chain runs to 31 residues: uncharacterized protein (31 aa).

This is an uncharacterized protein from Archaeoglobus fulgidus (strain ATCC 49558 / DSM 4304 / JCM 9628 / NBRC 100126 / VC-16).